The chain runs to 539 residues: T-complex protein 1 subunit delta (539 aa).

The tract at residues 1 to 29 is disordered; it reads MPENVAPRSGATAGAAGGRGKGAYQDRDK. At Arg-19 the chain carries Omega-N-methylarginine. An N6-acetyllysine modification is found at Lys-21. The residue at position 36 (Ser-36) is a Phosphoserine. Residue Gly-53 participates in ADP binding. Gly-53 lines the ATP pocket. Asp-104 serves as a coordination point for Mg(2+). ADP contacts are provided by Gly-105, Thr-106, Thr-107, Ser-108, Asn-172, Ser-173, and Lys-174. Residues Gly-105 and Thr-106 each contribute to the ATP site. Position 174 (Lys-174) interacts with ATP. A phosphoserine mark is found at Ser-184 and Ser-202. An N6-acetyllysine mark is found at Lys-288, Lys-302, Lys-319, and Lys-326. Position 425 (Gly-425) interacts with ADP. Ser-444 carries the phosphoserine modification. Gln-510 contributes to the ADP binding site.

The protein belongs to the TCP-1 chaperonin family. In terms of assembly, component of the chaperonin-containing T-complex (TRiC), a hexadecamer composed of two identical back-to-back stacked rings enclosing a protein folding chamber. Each ring is made up of eight different subunits: TCP1/CCT1, CCT2, CCT3, CCT4, CCT5, CCT6A/CCT6, CCT7, CCT8. Interacts with PACRG. Interacts with DNAAF4. Interacts with DLEC1.

The protein resides in the cytoplasm. Its subcellular location is the melanosome. It localises to the cytoskeleton. The protein localises to the microtubule organizing center. It is found in the centrosome. The protein resides in the cilium basal body. It catalyses the reaction ATP + H2O = ADP + phosphate + H(+). In terms of biological role, component of the chaperonin-containing T-complex (TRiC), a molecular chaperone complex that assists the folding of actin, tubulin and other proteins upon ATP hydrolysis. The TRiC complex mediates the folding of WRAP53/TCAB1, thereby regulating telomere maintenance. As part of the TRiC complex may play a role in the assembly of BBSome, a complex involved in ciliogenesis regulating transports vesicles to the cilia. The protein is T-complex protein 1 subunit delta (CCT4) of Homo sapiens (Human).